Consider the following 162-residue polypeptide: UPF0114 protein VCM66_0196 (162 aa).

The next 4 membrane-spanning stretches (helical) occupy residues 15–35 (IMAP…IKFF), 53–73 (LILV…IVMV), 109–126 (VSAS…KVFM), and 136–156 (IKWY…MGYL).

The protein belongs to the UPF0114 family.

It is found in the cell membrane. The protein is UPF0114 protein VCM66_0196 of Vibrio cholerae serotype O1 (strain M66-2).